A 1325-amino-acid polypeptide reads, in one-letter code: Clustered mitochondria protein homolog (1325 aa).

A Clu domain is found at 311-573 (PKHESDPMRT…RHTPMDVTWL (263 aa)). Disordered regions lie at residues 893-937 (KHAE…PLRT), 1032-1063 (DSNQGSSSDGDRIGTNDAGSADGSKTEHDDQL), and 1245-1325 (QHAR…AKRS). Positions 1265–1275 (SAHHHHHRHLH) are enriched in basic residues. The span at 1276–1285 (QQQQNSSSSP) shows a compositional bias: low complexity. Basic residues predominate over residues 1314 to 1325 (AARKRAARAKRS).

Belongs to the CLU family. In terms of assembly, may associate with the eukaryotic translation initiation factor 3 (eIF-3) complex.

The protein resides in the cytoplasm. MRNA-binding protein involved in proper cytoplasmic distribution of mitochondria. The polypeptide is Clustered mitochondria protein homolog (Malassezia globosa (strain ATCC MYA-4612 / CBS 7966) (Dandruff-associated fungus)).